Reading from the N-terminus, the 1378-residue chain is Protein CLASP-1 (1378 aa).

One copy of the HEAT 1 repeat lies at leucine 168–isoleucine 206. Disordered stretches follow at residues arginine 231–leucine 254, isoleucine 266–serine 325, and methionine 590–proline 725. 2 stretches are compositionally biased toward low complexity: residues serine 269–threonine 283 and asparagine 610–asparagine 619. Polar residues-rich tracts occupy residues isoleucine 620–alanine 630 and isoleucine 637–isoleucine 648. Positions serine 664–serine 676 are enriched in low complexity. A compositionally biased stretch (polar residues) spans glycine 677–lysine 690. Low complexity predominate over residues threonine 704 to threonine 721. A coiled-coil region spans residues alanine 740–aspartate 767. A compositionally biased stretch (basic and acidic residues) spans isoleucine 775–proline 784. Residues isoleucine 775–asparagine 823 form a disordered region. Over residues serine 786–arginine 812 the composition is skewed to polar residues. The HEAT 2 repeat unit spans residues histidine 1305–valine 1341.

This sequence belongs to the CLASP family.

The protein resides in the cytoplasm. The protein localises to the cytoskeleton. Functionally, microtubule plus-end tracking protein that promotes the stabilization of dynamic microtubules. Operates redundantly with cls-2 and cls-3 in regulating microtubule processes which position the spindle during asymmetric cell division. The chain is Protein CLASP-1 (cls-1) from Caenorhabditis elegans.